A 208-amino-acid polypeptide reads, in one-letter code: GTP cyclohydrolase 1 (208 aa).

Residues Cys89, His92, and Cys163 each coordinate Zn(2+).

Belongs to the GTP cyclohydrolase I family. In terms of assembly, homomer.

It catalyses the reaction GTP + H2O = 7,8-dihydroneopterin 3'-triphosphate + formate + H(+). Its pathway is cofactor biosynthesis; 7,8-dihydroneopterin triphosphate biosynthesis; 7,8-dihydroneopterin triphosphate from GTP: step 1/1. The polypeptide is GTP cyclohydrolase 1 (Saccharolobus islandicus (strain Y.N.15.51 / Yellowstone #2) (Sulfolobus islandicus)).